Reading from the N-terminus, the 1023-residue chain is MDEMSCGGGGGGARWKRARVAGMGEGKAGGGGGAAFLGLERVGMVVRMLPVPEKVSARARVVRGSLVAHFRGWRVVRETWWWVLLLWILAGSLGSFYLFLFMNAQSLDKRRDSLASMCDERARMLQDQFNVSMNHLQALAILVSTFHHSKTPSAIDQMTFARYAERTAFERPLTSGVAYAVRVTHGEREQFERQQGWAIKKMYSSSNKKQSSPGPGPGDAAVAEIREPAEEYAPVIFAQDAYKHVISFDMLSGNEDRDNILRARKSGKGVLTAPFKLLNNRLGVILTYTVYKYELPAYARPHERIQAAIGYLGGIFDIQALVEKLLKQLASQESIMVNVYDTTNESPISMYGDDTGSGMCHVSVLNFGDPSRKHEMHCRFEKKPPWPWLAITSSFGTLVIALLTGHIFQATVHRIAKVEDDFHKMSELKKRAEDADVAKSQFLATVSHEIRTPMNGVLGMLQMLMDTDLDTTQQDYVRTAQASGKALVSLINEVLDQAKIESGKLELETVPFDLRTVCDDILSLFCGKAQEKGLELAVYVSDQVPQILIGDPGRIRQIITNLVGNSIKFTERGHIYLTVHVVEEVMSCLEVETGIQNTNTLSGYPVANRRCSWESIRLFNRELHSSEKSFAPIASDSISLVISVEDTGVGIPFEAQSRVFTPFMQVGPSIARIHGGTGIGLSISKCLVGLMKGEIGFASKPHVGSTFTFTAVLMRAHCKGNDIKSSEFKGINALVVDHRPVRAKVTKYHLQRLGVKTELTAELNQFISKLNSGSLTAKLVLIDKETWLKESHCTPLLVNKLRNNDKPDSPKLFLLGSSASSPKGGSDTSREHNLNVIMKPLRASMLQVSLRRALGGVDKVHCRNGVVGNSTLGSLLHKKQIIVVDDNIVNLKVAAGALKKYGAEVTCADSGKKAITLLKPPHNFDACFMDIQMPEMDGFEATRRIRVMERDLNERIERGEAPPECASIQRWRTPILAMTADVIQATHEECLKSEMDGYVSKPFEGEQLYSEVARFFQNHDQVE.

Residues 1 to 80 (MDEMSCGGGG…RGWRVVRETW (80 aa)) are Cytoplasmic-facing. The chain crosses the membrane as a helical span at residues 81–101 (WWVLLLWILAGSLGSFYLFLF). Topologically, residues 102 to 387 (MNAQSLDKRR…CRFEKKPPWP (286 aa)) are extracellular. Residues 151 to 352 (TPSAIDQMTF…TNESPISMYG (202 aa)) form the CHASE domain. Residues 388–408 (WLAITSSFGTLVIALLTGHIF) form a helical membrane-spanning segment. The Cytoplasmic portion of the chain corresponds to 409-1023 (QATVHRIAKV…RFFQNHDQVE (615 aa)). The region spanning 445–715 (TVSHEIRTPM…TFTFTAVLMR (271 aa)) is the Histidine kinase domain. His-448 carries the post-translational modification Phosphohistidine; by autocatalysis. 2 consecutive Response regulatory domains span residues 732 to 854 (NALV…RRAL) and 880 to 1016 (QIIV…ARFF). The residue at position 783 (Asp-783) is a 4-aspartylphosphate. Residues 812 to 831 (LFLLGSSASSPKGGSDTSRE) form a disordered region. Positions 817-827 (SSASSPKGGSD) are enriched in polar residues. Asp-930 is subject to 4-aspartylphosphate.

Activation probably requires a transfer of a phosphate group between a His in the transmitter domain and an Asp of the receiver domain. As to expression, highly expressed in young leaves and at lower levels in roots, mature leaves, stems and spikelets.

Its subcellular location is the cell membrane. The catalysed reaction is ATP + protein L-histidine = ADP + protein N-phospho-L-histidine.. Its function is as follows. Cytokinin receptor related to bacterial two-component regulators. Functions as a histidine kinase and transmits the stress signal to a downstream MAPK cascade. The polypeptide is Probable histidine kinase 3 (Oryza sativa subsp. japonica (Rice)).